The chain runs to 376 residues: MSKRDFYEVLGVPKNASDDELKKAYRKLAMKYHPDRNQGDAAKPAEEKFKEAKEAYEILSDAQKRAAYDQYGHAGVDPNMRGGMGGAEGFGGFAEAFGDIFGDMFGGARGRGGRQVYRGNDLSYAMDVTLEEAAKGKEAQIRIPSWESCETCHGSGAKPGTSAKTCGTCQGSGTVQMRQGFFSVQQTCPHCRGTGKIIPEPCTACHGQGRVKKQKTLEVKIPAGIDDGMRIRSTGNGEPGTNGGPPGDLYIEIRIRKHDIFERDGDDLHCQVPVSFITAALGGEIEVPTLQGKAAIDIPEGTQAGKQFRLRGKGIKGVRASYPGDLYCHIIVETPVKLTEHQRKLLKELDESLKKGGAKHSPSTESWTDRLKSFFS.

Residues 5-72 (DFYEVLGVPK…QKRAAYDQYG (68 aa)) enclose the J domain. The CR-type zinc finger occupies 136–214 (GKEAQIRIPS…CHGQGRVKKQ (79 aa)). Zn(2+) contacts are provided by cysteine 149, cysteine 152, cysteine 166, cysteine 169, cysteine 188, cysteine 191, cysteine 202, and cysteine 205. 4 CXXCXGXG motif repeats span residues 149–156 (CETCHGSG), 166–173 (CGTCQGSG), 188–195 (CPHCRGTG), and 202–209 (CTACHGQG). 2 disordered regions span residues 227-246 (DGMR…GGPP) and 354-376 (KKGG…SFFS). A compositionally biased stretch (gly residues) spans 237-246 (GEPGTNGGPP). The segment covering 367–376 (WTDRLKSFFS) has biased composition (basic and acidic residues).

Belongs to the DnaJ family. In terms of assembly, homodimer. It depends on Zn(2+) as a cofactor.

It localises to the cytoplasm. Its function is as follows. Participates actively in the response to hyperosmotic and heat shock by preventing the aggregation of stress-denatured proteins and by disaggregating proteins, also in an autonomous, DnaK-independent fashion. Unfolded proteins bind initially to DnaJ; upon interaction with the DnaJ-bound protein, DnaK hydrolyzes its bound ATP, resulting in the formation of a stable complex. GrpE releases ADP from DnaK; ATP binding to DnaK triggers the release of the substrate protein, thus completing the reaction cycle. Several rounds of ATP-dependent interactions between DnaJ, DnaK and GrpE are required for fully efficient folding. Also involved, together with DnaK and GrpE, in the DNA replication of plasmids through activation of initiation proteins. The chain is Chaperone protein DnaJ from Acidovorax ebreus (strain TPSY) (Diaphorobacter sp. (strain TPSY)).